Reading from the N-terminus, the 210-residue chain is Cytochrome c4 (210 aa).

The signal sequence occupies residues 1 to 20; the sequence is MNKALVTLLLTLGITGLAHA. 8 residues coordinate heme c: Cys-34, Cys-37, His-38, Met-86, Cys-139, Cys-142, His-143, and Met-187.

Binds 2 heme c groups covalently per subunit.

It is found in the periplasm. In terms of biological role, diheme, high potential cytochrome c believed to be an intermediate electron donor to terminal oxidation systems. The polypeptide is Cytochrome c4 (cycA) (Azotobacter vinelandii).